Here is a 510-residue protein sequence, read N- to C-terminus: Cobyric acid synthase (510 aa).

In terms of domain architecture, GATase cobBQ-type spans 262 to 460 (EIKVGIIKLP…IHGIFENDEW (199 aa)). Cysteine 343 functions as the Nucleophile in the catalytic mechanism. Residue histidine 452 is part of the active site.

It belongs to the CobB/CobQ family. CobQ subfamily.

It participates in cofactor biosynthesis; adenosylcobalamin biosynthesis. Its function is as follows. Catalyzes amidations at positions B, D, E, and G on adenosylcobyrinic A,C-diamide. NH(2) groups are provided by glutamine, and one molecule of ATP is hydrogenolyzed for each amidation. The chain is Cobyric acid synthase from Prochlorococcus marinus (strain MIT 9515).